A 105-amino-acid polypeptide reads, in one-letter code: uncharacterized protein (105 aa).

The chain crosses the membrane as a helical span at residues 4–26 (TQILLILFVGILVTTPHDIFIII).

The protein localises to the membrane. This is an uncharacterized protein from Rickettsia conorii (strain ATCC VR-613 / Malish 7).